Reading from the N-terminus, the 197-residue chain is Small ribosomal subunit protein uS5 (197 aa).

The interval 1–27 is disordered; it reads MAEREQRGGRDQRGGGRERKEREERDS. An S5 DRBM domain is found at 29 to 92; that stretch reads FVDKLVHINR…ESAKRNLTRV (64 aa).

The protein belongs to the universal ribosomal protein uS5 family. Part of the 30S ribosomal subunit. Contacts proteins S4 and S8.

In terms of biological role, with S4 and S12 plays an important role in translational accuracy. Its function is as follows. Located at the back of the 30S subunit body where it stabilizes the conformation of the head with respect to the body. This chain is Small ribosomal subunit protein uS5, found in Bradyrhizobium diazoefficiens (strain JCM 10833 / BCRC 13528 / IAM 13628 / NBRC 14792 / USDA 110).